We begin with the raw amino-acid sequence, 264 residues long: Cytosolic Fe-S cluster assembly factor Nubp2 homolog (264 aa).

ATP is bound at residue Gly14 to Ser21. [4Fe-4S] cluster-binding residues include Cys188 and Cys191.

This sequence belongs to the Mrp/NBP35 ATP-binding proteins family. NUBP2/CFD1 subfamily. As to quaternary structure, heterotetramer of 2 Nubp1 and 2 Nubp2 chains. The cofactor is [4Fe-4S] cluster.

Its subcellular location is the cytoplasm. Functionally, component of the cytosolic iron-sulfur (Fe/S) protein assembly (CIA) machinery. Required for maturation of extramitochondrial Fe-S proteins. The Nubp1-Nubp2 heterotetramer forms a Fe-S scaffold complex, mediating the de novo assembly of an Fe-S cluster and its transfer to target apoproteins. The polypeptide is Cytosolic Fe-S cluster assembly factor Nubp2 homolog (Drosophila grimshawi (Hawaiian fruit fly)).